The following is an 81-amino-acid chain: Short neurotoxin SN160 (81 aa).

An N-terminal signal peptide occupies residues 1 to 21 (MKTLLLTLVVVTIVCLDLGYT). 4 cysteine pairs are disulfide-bonded: Cys-24/Cys-43, Cys-38/Cys-60, Cys-62/Cys-73, and Cys-74/Cys-79.

This sequence belongs to the three-finger toxin family. Short-chain subfamily. Type I alpha-neurotoxin sub-subfamily. In terms of tissue distribution, expressed by the venom gland.

The protein resides in the secreted. In terms of biological role, binds to muscle nicotinic acetylcholine receptor (nAChR) and inhibit acetylcholine from binding to the receptor, thereby impairing neuromuscular transmission. The chain is Short neurotoxin SN160 from Hydrophis hardwickii (Hardwick's spine-bellied seasnake).